A 166-amino-acid polypeptide reads, in one-letter code: Ribosome maturation factor RimM (166 aa).

A PRC barrel domain is found at 94–166 (GDEYYWRDLM…EMVVRLLPGL (73 aa)).

It belongs to the RimM family. As to quaternary structure, binds ribosomal protein uS19.

The protein localises to the cytoplasm. In terms of biological role, an accessory protein needed during the final step in the assembly of 30S ribosomal subunit, possibly for assembly of the head region. Essential for efficient processing of 16S rRNA. May be needed both before and after RbfA during the maturation of 16S rRNA. It has affinity for free ribosomal 30S subunits but not for 70S ribosomes. The protein is Ribosome maturation factor RimM of Syntrophus aciditrophicus (strain SB).